Here is a 401-residue protein sequence, read N- to C-terminus: F-box protein At2g43440 (401 aa).

Positions 7–53 constitute an F-box domain; sequence NTNSIYIVPELLEDIFLRLPLKSILKFKTVSRQWRSILESKLFVERR.

This is F-box protein At2g43440 from Arabidopsis thaliana (Mouse-ear cress).